A 72-amino-acid polypeptide reads, in one-letter code: NAD(P)H-quinone oxidoreductase subunit O (72 aa).

This sequence belongs to the complex I NdhO subunit family. NDH-1 can be composed of about 15 different subunits; different subcomplexes with different compositions have been identified which probably have different functions.

Its subcellular location is the cellular thylakoid membrane. It catalyses the reaction a plastoquinone + NADH + (n+1) H(+)(in) = a plastoquinol + NAD(+) + n H(+)(out). The catalysed reaction is a plastoquinone + NADPH + (n+1) H(+)(in) = a plastoquinol + NADP(+) + n H(+)(out). NDH-1 shuttles electrons from an unknown electron donor, via FMN and iron-sulfur (Fe-S) centers, to quinones in the respiratory and/or the photosynthetic chain. The immediate electron acceptor for the enzyme in this species is believed to be plastoquinone. Couples the redox reaction to proton translocation, and thus conserves the redox energy in a proton gradient. Cyanobacterial NDH-1 also plays a role in inorganic carbon-concentration. In Synechococcus sp. (strain JA-3-3Ab) (Cyanobacteria bacterium Yellowstone A-Prime), this protein is NAD(P)H-quinone oxidoreductase subunit O.